The following is a 69-amino-acid chain: MYKITATIEKEGGTPTNWTRYSKSKLTKSECEKMLSGKKEAGVSREQKVKLINFNCEKLQSSRIALYSN.

Functionally, helps to maintain the integrity of the chromosome by lowering the steady-state level of double strand breaks. This region of DNA acts as an antitoxin to toxin RalR, a DNase, but it seems to be sRNA RalA that has the antitoxin activity and not this putative protein. Therefore the identity of this as a protein-coding gene has been cast into doubt. The polypeptide is Double-strand break reduction protein (Escherichia coli (strain K12)).